Reading from the N-terminus, the 204-residue chain is Holliday junction branch migration complex subunit RuvA (204 aa).

A domain I region spans residues 1 to 63 (MIGWLQGRVL…EDGQFLYGFS (63 aa)). The tract at residues 64–142 (SFLQRQLFRE…KNDLFLCDES (79 aa)) is domain II. The interval 143-152 (ESSRAPIALS) is flexible linker. A domain III region spans residues 152 to 204 (SASEEAIQALIALELAPAEAELWVKKAQKTLAEDADSAALIKTAFALRLQGAK).

This sequence belongs to the RuvA family. In terms of assembly, homotetramer. Forms an RuvA(8)-RuvB(12)-Holliday junction (HJ) complex. HJ DNA is sandwiched between 2 RuvA tetramers; dsDNA enters through RuvA and exits via RuvB. An RuvB hexamer assembles on each DNA strand where it exits the tetramer. Each RuvB hexamer is contacted by two RuvA subunits (via domain III) on 2 adjacent RuvB subunits; this complex drives branch migration. In the full resolvosome a probable DNA-RuvA(4)-RuvB(12)-RuvC(2) complex forms which resolves the HJ.

Its subcellular location is the cytoplasm. Its function is as follows. The RuvA-RuvB-RuvC complex processes Holliday junction (HJ) DNA during genetic recombination and DNA repair, while the RuvA-RuvB complex plays an important role in the rescue of blocked DNA replication forks via replication fork reversal (RFR). RuvA specifically binds to HJ cruciform DNA, conferring on it an open structure. The RuvB hexamer acts as an ATP-dependent pump, pulling dsDNA into and through the RuvAB complex. HJ branch migration allows RuvC to scan DNA until it finds its consensus sequence, where it cleaves and resolves the cruciform DNA. In Dichelobacter nodosus (strain VCS1703A), this protein is Holliday junction branch migration complex subunit RuvA.